Reading from the N-terminus, the 284-residue chain is Bifunctional protein FolD (284 aa).

NADP(+) contacts are provided by residues 165–167 (GRS) and Ser190.

It belongs to the tetrahydrofolate dehydrogenase/cyclohydrolase family. As to quaternary structure, homodimer.

The catalysed reaction is (6R)-5,10-methylene-5,6,7,8-tetrahydrofolate + NADP(+) = (6R)-5,10-methenyltetrahydrofolate + NADPH. The enzyme catalyses (6R)-5,10-methenyltetrahydrofolate + H2O = (6R)-10-formyltetrahydrofolate + H(+). It participates in one-carbon metabolism; tetrahydrofolate interconversion. Functionally, catalyzes the oxidation of 5,10-methylenetetrahydrofolate to 5,10-methenyltetrahydrofolate and then the hydrolysis of 5,10-methenyltetrahydrofolate to 10-formyltetrahydrofolate. This is Bifunctional protein FolD from Streptococcus uberis (strain ATCC BAA-854 / 0140J).